We begin with the raw amino-acid sequence, 398 residues long: Isopenicillin N epimerase (398 aa).

Lys-217 carries the N6-(pyridoxal phosphate)lysine modification.

The protein belongs to the class-V pyridoxal-phosphate-dependent aminotransferase family. It depends on pyridoxal 5'-phosphate as a cofactor.

It carries out the reaction isopenicillin N = penicillin N. It functions in the pathway antibiotic biosynthesis; cephalosporin C biosynthesis. Its function is as follows. Catalyzes the reversible isomerization between isopenicillin N and penicillin N. This is Isopenicillin N epimerase (cefD) from Streptomyces clavuligerus.